Here is a 140-residue protein sequence, read N- to C-terminus: Desampylase (140 aa).

In terms of domain architecture, MPN spans 13–133 (TLIIPQHYLR…WILSEKNKIS (121 aa)). The active-site Proton donor/acceptor is Glu-34. The Zn(2+) site is built by His-88, His-90, and Asp-101. The JAMM motif signature appears at 88 to 101 (HSHIACPPIPSGKD).

This sequence belongs to the peptidase M67B family. Exists in two major states: monomer and homodimer. Both conformational states are catalytically active. Zn(2+) is required as a cofactor. In terms of processing, the disulfide bridge probably stabilizes the PfJAMM1 homodimer at the optimal growth temperature of the hyperthermophile.

The enzyme catalyses an N(6)-[small archaeal modifier protein]-[protein]-L-lysine + H2O = a [protein]-L-lysine + a [small archaeal modifier protein].. Its activity is regulated as follows. Inhibited by EDTA in vitro. Its function is as follows. Metalloprotease that displays desampylase (DSAMP) activity, cleaving ubiquitin-like small archaeal modifier proteins (SAMP1, SAMP2 and SAMP3) from protein conjugates (isopeptide- and linear-linked). Thus, likely regulates sampylation and the pools of 'free' SAMP available for protein modification. In vitro, is also able to cleave non-physiological ubiquitin (Ub) substrates, such as 'Met1-', 'Lys48-', and 'Lys63'-linked Ub dimers (Ub2), and to remove Ub tags from diverse proteins. The protein is Desampylase of Pyrococcus furiosus (strain ATCC 43587 / DSM 3638 / JCM 8422 / Vc1).